The following is a 172-amino-acid chain: Peptide deformylase (172 aa).

Cys91 and His133 together coordinate Fe cation. Residue Glu134 is part of the active site. A Fe cation-binding site is contributed by His137.

It belongs to the polypeptide deformylase family. The cofactor is Fe(2+).

The catalysed reaction is N-terminal N-formyl-L-methionyl-[peptide] + H2O = N-terminal L-methionyl-[peptide] + formate. Functionally, removes the formyl group from the N-terminal Met of newly synthesized proteins. Requires at least a dipeptide for an efficient rate of reaction. N-terminal L-methionine is a prerequisite for activity but the enzyme has broad specificity at other positions. The sequence is that of Peptide deformylase from Vibrio campbellii (strain ATCC BAA-1116).